Reading from the N-terminus, the 588-residue chain is Lysine--tRNA ligase (588 aa).

A compositionally biased stretch (polar residues) spans 1–10 (MDSSVSTEPL). The tract at residues 1-54 (MDSSVSTEPLSKNALKREKKAKEKEQLEQEKKAAAVAKRQMEQHNLPENDDLDP) is disordered. Residues 20 to 47 (KAKEKEQLEQEKKAAAVAKRQMEQHNLP) show a composition bias toward basic and acidic residues.

The protein belongs to the class-II aminoacyl-tRNA synthetase family.

It localises to the cytoplasm. It carries out the reaction tRNA(Lys) + L-lysine + ATP = L-lysyl-tRNA(Lys) + AMP + diphosphate. The polypeptide is Lysine--tRNA ligase (LYSRS) (Solanum lycopersicum (Tomato)).